Consider the following 999-residue polypeptide: Protein Smaug (999 aa).

Residues 1–37 are compositionally biased toward polar residues; that stretch reads MKYATGTDNAMTSGISGQTNNSNSVSNEMQPTTSTPT. Disordered stretches follow at residues 1–45, 50–69, and 321–370; these read MKYA…EATS, TATYANGNPNSNANPSQSQP, and CSSV…GSSS. The segment covering 321 to 338 has biased composition (low complexity); that stretch reads CSSVASSSMCPASGSRSS. Phosphoserine occurs at positions 564 and 575. The interval 583-763 is interaction with cup; sequence EFKPNYIKFH…KDLKFKLSKM (181 aa). Residues 600–654 enclose the SAM domain; sequence GIGLWLKSLRLHKYIELFKNMTYEEMLLITEDFLQSVGVTKGASHKLALCIDKLK. A disordered region spans residues 773 to 892; it reads HVKPAGVGPN…HHHAQQMQQM (120 aa). 2 stretches are compositionally biased toward polar residues: residues 801–822 and 854–864; these read KNGSNDRINNRKNSNDMLNFSL and HQPQYKSSSYP. Serine 972 is subject to Phosphoserine.

It belongs to the SMAUG family. Interacts with oskar (osk). Binds to the 3'-UTR of nos. Interacts with cup, which in turn recruits eIF4-E, leading to an indirect interaction between smg and eIF4-E that prevents mRNA translation.

The protein resides in the cytoplasm. Functionally, translation regulator that binds to the 3'-UTR of specific mRNAs such as nanos (nos) and prevent their translation. Prevents translation of unlocalized nos in the bulk cytoplasm via the recruitment of cup. In Drosophila yakuba (Fruit fly), this protein is Protein Smaug (smg).